The sequence spans 27 residues: Antimicrobial peptide 1 (27 aa).

Expressed by the skin glands.

The protein localises to the secreted. Functionally, has very weak antimicrobial activity against Gram-positive bacterium S.aureus and Gram-negative bacterium E.coli and stronger activity against yeast C.albicans. Enhances the antibacterial activity of XT3. Has hemolytic activity against human red blood cells. The polypeptide is Antimicrobial peptide 1 (Xenopus tropicalis (Western clawed frog)).